We begin with the raw amino-acid sequence, 331 residues long: Phospho-N-acetylmuramoyl-pentapeptide-transferase (331 aa).

9 helical membrane-spanning segments follow: residues 7-27 (IIYT…LTIP), 54-74 (TIGG…SGLI), 78-98 (LWIA…DDFI), 106-126 (LGLR…ILAI), 133-153 (IMGT…AGFT), 154-174 (ITQT…VVVA), 195-215 (IIAA…LAIF), 249-269 (AIAT…VGGI), and 311-331 (VVIV…LALS).

The protein belongs to the glycosyltransferase 4 family. MraY subfamily. Mg(2+) is required as a cofactor.

It is found in the cell membrane. The catalysed reaction is UDP-N-acetyl-alpha-D-muramoyl-L-alanyl-gamma-D-glutamyl-meso-2,6-diaminopimeloyl-D-alanyl-D-alanine + di-trans,octa-cis-undecaprenyl phosphate = di-trans,octa-cis-undecaprenyl diphospho-N-acetyl-alpha-D-muramoyl-L-alanyl-D-glutamyl-meso-2,6-diaminopimeloyl-D-alanyl-D-alanine + UMP. It functions in the pathway cell wall biogenesis; peptidoglycan biosynthesis. In terms of biological role, catalyzes the initial step of the lipid cycle reactions in the biosynthesis of the cell wall peptidoglycan: transfers peptidoglycan precursor phospho-MurNAc-pentapeptide from UDP-MurNAc-pentapeptide onto the lipid carrier undecaprenyl phosphate, yielding undecaprenyl-pyrophosphoryl-MurNAc-pentapeptide, known as lipid I. This Alkaliphilus metalliredigens (strain QYMF) protein is Phospho-N-acetylmuramoyl-pentapeptide-transferase.